A 205-amino-acid chain; its full sequence is Small ribosomal subunit protein uS4 (205 aa).

Residues 1 to 12 (MSKRIQAKHKLD) are compositionally biased toward basic residues. The disordered stretch occupies residues 1-49 (MSKRIQAKHKLDRRMGQNIWGRPKSPVNRREYGPGQHGQRRKGKLSDFG). The S4 RNA-binding domain maps to 94-156 (RRLDAVIYRA…SKQLEIVVVA (63 aa)).

The protein belongs to the universal ribosomal protein uS4 family. In terms of assembly, part of the 30S ribosomal subunit. Contacts protein S5. The interaction surface between S4 and S5 is involved in control of translational fidelity.

Its function is as follows. One of the primary rRNA binding proteins, it binds directly to 16S rRNA where it nucleates assembly of the body of the 30S subunit. In terms of biological role, with S5 and S12 plays an important role in translational accuracy. The protein is Small ribosomal subunit protein uS4 of Methylobacterium nodulans (strain LMG 21967 / CNCM I-2342 / ORS 2060).